The chain runs to 443 residues: ATP-dependent protease ATPase subunit HslU (443 aa).

ATP-binding positions include I18 and 60–65; that span reads GVGKTE. Residues 139–161 form a disordered region; it reads ARDSGFDANPSEENNATRQKFRK. ATP-binding residues include D256, E321, and R393.

Belongs to the ClpX chaperone family. HslU subfamily. In terms of assembly, a double ring-shaped homohexamer of HslV is capped on each side by a ring-shaped HslU homohexamer. The assembly of the HslU/HslV complex is dependent on binding of ATP.

The protein localises to the cytoplasm. Its function is as follows. ATPase subunit of a proteasome-like degradation complex; this subunit has chaperone activity. The binding of ATP and its subsequent hydrolysis by HslU are essential for unfolding of protein substrates subsequently hydrolyzed by HslV. HslU recognizes the N-terminal part of its protein substrates and unfolds these before they are guided to HslV for hydrolysis. In Nitrosomonas eutropha (strain DSM 101675 / C91 / Nm57), this protein is ATP-dependent protease ATPase subunit HslU.